Consider the following 507-residue polypeptide: Anaerobic nitric oxide reductase transcription regulator NorR (507 aa).

Aspartate 57 carries the 4-aspartylphosphate modification. Residues 188–417 enclose the Sigma-54 factor interaction domain; that stretch reads IIGLSSVMQQ…LEHSIYRAAI (230 aa). ATP is bound by residues 216-223 and 279-288; these read GETGVGKE and ADNGTLFLDE. A DNA-binding region (H-T-H motif) is located at residues 483–502; it reads WAATARKLELDSGNLHRLAK.

It participates in nitrogen metabolism; nitric oxide reduction. In terms of biological role, required for the expression of anaerobic nitric oxide (NO) reductase, acts as a transcriptional activator for at least the norVW operon. Activation also requires sigma-54. This chain is Anaerobic nitric oxide reductase transcription regulator NorR, found in Serratia proteamaculans (strain 568).